The chain runs to 448 residues: N-succinylarginine dihydrolase (448 aa).

Substrate-binding positions include Ala20 to Ser29, Asn111, and His138 to Arg139. Glu175 is an active-site residue. A substrate-binding site is contributed by Arg213. The active site involves His249. The substrate site is built by Asp251 and Asn360. Cys366 (nucleophile) is an active-site residue.

Belongs to the succinylarginine dihydrolase family. In terms of assembly, homodimer.

It carries out the reaction N(2)-succinyl-L-arginine + 2 H2O + 2 H(+) = N(2)-succinyl-L-ornithine + 2 NH4(+) + CO2. It functions in the pathway amino-acid degradation; L-arginine degradation via AST pathway; L-glutamate and succinate from L-arginine: step 2/5. Its function is as follows. Catalyzes the hydrolysis of N(2)-succinylarginine into N(2)-succinylornithine, ammonia and CO(2). In Shigella dysenteriae serotype 1 (strain Sd197), this protein is N-succinylarginine dihydrolase.